The chain runs to 358 residues: Methylthioribose-1-phosphate isomerase (358 aa).

Residues 54–56 (RGA), arginine 96, and glutamine 205 contribute to the substrate site. The Proton donor role is filled by aspartate 246. 256-257 (SK) is a substrate binding site.

Belongs to the eIF-2B alpha/beta/delta subunits family. MtnA subfamily.

It carries out the reaction 5-(methylsulfanyl)-alpha-D-ribose 1-phosphate = 5-(methylsulfanyl)-D-ribulose 1-phosphate. Its pathway is amino-acid biosynthesis; L-methionine biosynthesis via salvage pathway; L-methionine from S-methyl-5-thio-alpha-D-ribose 1-phosphate: step 1/6. Its function is as follows. Catalyzes the interconversion of methylthioribose-1-phosphate (MTR-1-P) into methylthioribulose-1-phosphate (MTRu-1-P). This Pseudomonas putida (strain GB-1) protein is Methylthioribose-1-phosphate isomerase.